The following is an 84-amino-acid chain: MMFRLFLLISFIVLCHSIVSEISHRFLHRDPEYEGRVYYEPLYTSKDFRLGGSAQLSPLYEMTNSHLLNLADLLRKRTETQTPY.

This is an uncharacterized protein from Caenorhabditis elegans.